Consider the following 65-residue polypeptide: Large ribosomal subunit protein bL35 (65 aa).

The protein belongs to the bacterial ribosomal protein bL35 family.

This Sodalis glossinidius (strain morsitans) protein is Large ribosomal subunit protein bL35.